Reading from the N-terminus, the 128-residue chain is Protein C10 (128 aa).

This sequence belongs to the UPF0456 family.

The protein localises to the cytoplasm. The protein is Protein C10 of Xenopus tropicalis (Western clawed frog).